A 73-amino-acid chain; its full sequence is Translation initiation factor IF-1 (73 aa).

In terms of domain architecture, S1-like spans 1 to 73; sequence MSEKEAGIEV…SRGRITYRDK (73 aa).

This sequence belongs to the IF-1 family. As to quaternary structure, component of the 30S ribosomal translation pre-initiation complex which assembles on the 30S ribosome in the order IF-2 and IF-3, IF-1 and N-formylmethionyl-tRNA(fMet); mRNA recruitment can occur at any time during PIC assembly.

The protein resides in the cytoplasm. One of the essential components for the initiation of protein synthesis. Stabilizes the binding of IF-2 and IF-3 on the 30S subunit to which N-formylmethionyl-tRNA(fMet) subsequently binds. Helps modulate mRNA selection, yielding the 30S pre-initiation complex (PIC). Upon addition of the 50S ribosomal subunit IF-1, IF-2 and IF-3 are released leaving the mature 70S translation initiation complex. In Anaeromyxobacter dehalogenans (strain 2CP-C), this protein is Translation initiation factor IF-1.